Reading from the N-terminus, the 466-residue chain is MRMNKILLVFVFLSIATVINSGTTSNFVRTAQPSTEMSLETFPSPAGHNAPEQVHIVQGDYNGRGIIISWVTPLNLAGSNVVTYWKAVDGDVKPKKKRGHASTSSYRFYDYTSGFLHHATIKGLEYDTKYIYEVGTDGSVRQFSFTSPPKVGPDVPYTFGIIGDLGQTLASNETLYHYMSNPKGQAVLFPGDLSYADDHPNHDQRKWDSWGRFVEPCAAYQTFIYAAGNHEIDFVPNIGEPHAFKPYIHRYHNAYKASKSISPLWYSIRRASAHIIVLSSYSAYGKYTPQYVWLEQELKKVNREETPWLIVMVHSPWYNSNNYHYMEGESMRAMFESWFVNSKVDLVLSGHVHSYERSERVSNIKYNITNGLSYPVKDPSAPIYITIGDGGNIEGIANSFTDPQPSYSAYREASFGHAVLEIYNRTHAYYTWHRNQDNEPVAADSIMLHNRYFFPVEELESGNTRA.

The N-terminal stretch at 1-21 (MRMNKILLVFVFLSIATVINS) is a signal peptide. Aspartate 164 lines the Fe cation pocket. Residue asparagine 172 is glycosylated (N-linked (GlcNAc...) asparagine). Fe cation is bound by residues aspartate 192 and tyrosine 195. Residue aspartate 192 coordinates Zn(2+). Residues asparagine 229 and histidine 314 each contribute to the Zn(2+) site. Asparagine 229 serves as a coordination point for substrate. Histidine 324 (proton donor) is an active-site residue. Histidine 351 contributes to the Zn(2+) binding site. 351–353 (HVH) lines the substrate pocket. Histidine 353 serves as a coordination point for Fe cation. 2 N-linked (GlcNAc...) asparagine glycosylation sites follow: asparagine 367 and asparagine 424.

Belongs to the metallophosphoesterase superfamily. Purple acid phosphatase family. In terms of assembly, homodimer. Requires Fe cation as cofactor. Zn(2+) is required as a cofactor. Specifically expressed in flowers.

Its subcellular location is the secreted. It catalyses the reaction a phosphate monoester + H2O = an alcohol + phosphate. The protein is Purple acid phosphatase 25 (PAP25) of Arabidopsis thaliana (Mouse-ear cress).